Consider the following 740-residue polypeptide: 1,4-alpha-glucan branching enzyme GlgB (740 aa).

D414 functions as the Nucleophile in the catalytic mechanism. Catalysis depends on E467, which acts as the Proton donor.

It belongs to the glycosyl hydrolase 13 family. GlgB subfamily. As to quaternary structure, monomer.

The catalysed reaction is Transfers a segment of a (1-&gt;4)-alpha-D-glucan chain to a primary hydroxy group in a similar glucan chain.. Its pathway is glycan biosynthesis; glycogen biosynthesis. Functionally, catalyzes the formation of the alpha-1,6-glucosidic linkages in glycogen by scission of a 1,4-alpha-linked oligosaccharide from growing alpha-1,4-glucan chains and the subsequent attachment of the oligosaccharide to the alpha-1,6 position. The sequence is that of 1,4-alpha-glucan branching enzyme GlgB from Rhodospirillum rubrum (strain ATCC 11170 / ATH 1.1.1 / DSM 467 / LMG 4362 / NCIMB 8255 / S1).